We begin with the raw amino-acid sequence, 1377 residues long: DNA-directed RNA polymerase subunit beta (1377 aa).

Belongs to the RNA polymerase beta chain family. In terms of assembly, the RNAP catalytic core consists of 2 alpha, 1 beta, 1 beta' and 1 omega subunit. When a sigma factor is associated with the core the holoenzyme is formed, which can initiate transcription.

The enzyme catalyses RNA(n) + a ribonucleoside 5'-triphosphate = RNA(n+1) + diphosphate. Functionally, DNA-dependent RNA polymerase catalyzes the transcription of DNA into RNA using the four ribonucleoside triphosphates as substrates. This Brucella melitensis biotype 2 (strain ATCC 23457) protein is DNA-directed RNA polymerase subunit beta.